Reading from the N-terminus, the 224-residue chain is UPF0758 protein lwe1562 (224 aa).

Residues 102 to 224 (VIRCPDDAVK…YISLKEKGYF (123 aa)) form the MPN domain. Zn(2+)-binding residues include histidine 173, histidine 175, and aspartate 186. The short motif at 173-186 (HNHPSGDPTPSSED) is the JAMM motif element.

The protein belongs to the UPF0758 family.

In Listeria welshimeri serovar 6b (strain ATCC 35897 / DSM 20650 / CCUG 15529 / CIP 8149 / NCTC 11857 / SLCC 5334 / V8), this protein is UPF0758 protein lwe1562.